The following is a 515-amino-acid chain: Tripartite motif-containing protein 5 (515 aa).

Ala-2 carries the N-acetylalanine modification. Residues 15 to 60 (CPICLELLTEPLSLPCGHSFCQACITANHKESMLYKEEERSCPVCR) form an RING-type zinc finger. Residue Ser-87 is modified to Phosphoserine. Residues 92 to 133 (QKVDHCARHGEKLLLFCQEDSKVICWLCERSQEHRGHHTFLM) form a B box-type zinc finger. Residues Cys-97, His-100, Cys-119, and His-125 each contribute to the Zn(2+) site. Positions 137–225 (AQEYHVKLQT…LTKSETEMVQ (89 aa)) form a coiled coil. Residues 187 to 200 (FEQLREILDWEESN) are required for interaction with GABARAP and for autophagy. Residues 283–515 (LKGMLDMFRE…VPMTLCSPSS (233 aa)) form the B30.2/SPRY domain.

It belongs to the TRIM/RBCC family. In terms of assembly, can form homodimers and homotrimers. In addition to lower-order dimerization, also exhibits a higher-order multimerization and both low- and high-order multimerizations are essential for its restriction activity. Interacts with BTBD1 and BTBD2. Interacts with PSMC4, PSMC5, PSMD7 and HSPA8/HSC70. Interacts (via B30.2/SPRY domain) with HSPA1A/B. Interacts with PSMC2, MAP3K7/TAK1, TAB2 and TAB3. Interacts with SQSTM1. Interacts with TRIM6 and TRIM34. Interacts with ULK1 (phosphorylated form), GABARAP, GABARAPL1, GABARAPL2, MAP1LC3A, MAP1LC3C and BECN1. Degraded in a proteasome-independent fashion in the absence of viral infection but in a proteasome-dependent fashion following exposure to restriction sensitive virus. Post-translationally, autoubiquitinated in a RING finger- and UBE2D2-dependent manner. Monoubiquitinated by TRIM21. Deubiquitinated by Yersinia YopJ. Ubiquitination may not lead to proteasomal degradation.

It is found in the cytoplasm. Its subcellular location is the nucleus. The enzyme catalyses S-ubiquitinyl-[E2 ubiquitin-conjugating enzyme]-L-cysteine + [acceptor protein]-L-lysine = [E2 ubiquitin-conjugating enzyme]-L-cysteine + N(6)-ubiquitinyl-[acceptor protein]-L-lysine.. The protein operates within protein modification; protein ubiquitination. Its function is as follows. Capsid-specific restriction factor that prevents infection from non-host-adapted retroviruses. Blocks viral replication early in the life cycle, after viral entry but before reverse transcription. In addition to acting as a capsid-specific restriction factor, also acts as a pattern recognition receptor that activates innate immune signaling in response to the retroviral capsid lattice. Binding to the viral capsid triggers its E3 ubiquitin ligase activity, and in concert with the heterodimeric ubiquitin conjugating enzyme complex UBE2V1-UBE2N (also known as UBC13-UEV1A complex) generates 'Lys-63'-linked polyubiquitin chains, which in turn are catalysts in the autophosphorylation of the MAP3K7/TAK1 complex (includes TAK1, TAB2, and TAB3). Activation of the MAP3K7/TAK1 complex by autophosphorylation results in the induction and expression of NF-kappa-B and MAPK-responsive inflammatory genes, thereby leading to an innate immune response in the infected cell. Restricts infection by human immunodeficiency virus type 1 (HIV-1), simian immunodeficiency virus (SIV-mac) and N-tropic murine leukemia viruse (N-MLV). Plays a role in regulating autophagy through activation of autophagy regulator BECN1 by causing its dissociation from its inhibitors BCL2 and TAB2. The polypeptide is Tripartite motif-containing protein 5 (TRIM5) (Chlorocebus tantalus (Tantalus monkey)).